A 236-amino-acid polypeptide reads, in one-letter code: Purine nucleoside phosphorylase DeoD-type (236 aa).

His-5 contacts a purine D-ribonucleoside. Residues Gly-21, Arg-25, Arg-44, and 88-91 contribute to the phosphate site; that span reads RVGT. Residues 180-182 and 204-205 each bind a purine D-ribonucleoside; these read EME and SD. The active-site Proton donor is Asp-205.

It belongs to the PNP/UDP phosphorylase family. As to quaternary structure, homohexamer; trimer of homodimers.

It catalyses the reaction a purine D-ribonucleoside + phosphate = a purine nucleobase + alpha-D-ribose 1-phosphate. It carries out the reaction a purine 2'-deoxy-D-ribonucleoside + phosphate = a purine nucleobase + 2-deoxy-alpha-D-ribose 1-phosphate. Its function is as follows. Catalyzes the reversible phosphorolytic breakdown of the N-glycosidic bond in the beta-(deoxy)ribonucleoside molecules, with the formation of the corresponding free purine bases and pentose-1-phosphate. This chain is Purine nucleoside phosphorylase DeoD-type, found in Shewanella denitrificans (strain OS217 / ATCC BAA-1090 / DSM 15013).